The sequence spans 377 residues: Succinyl-diaminopimelate desuccinylase (377 aa).

H68 is a Zn(2+) binding site. Residue D70 is part of the active site. D101 provides a ligand contact to Zn(2+). E135 acts as the Proton acceptor in catalysis. Residues E136, E164, and H350 each contribute to the Zn(2+) site.

The protein belongs to the peptidase M20A family. DapE subfamily. Homodimer. The cofactor is Zn(2+). Co(2+) is required as a cofactor.

The catalysed reaction is N-succinyl-(2S,6S)-2,6-diaminopimelate + H2O = (2S,6S)-2,6-diaminopimelate + succinate. The protein operates within amino-acid biosynthesis; L-lysine biosynthesis via DAP pathway; LL-2,6-diaminopimelate from (S)-tetrahydrodipicolinate (succinylase route): step 3/3. Functionally, catalyzes the hydrolysis of N-succinyl-L,L-diaminopimelic acid (SDAP), forming succinate and LL-2,6-diaminopimelate (DAP), an intermediate involved in the bacterial biosynthesis of lysine and meso-diaminopimelic acid, an essential component of bacterial cell walls. The sequence is that of Succinyl-diaminopimelate desuccinylase from Aliivibrio salmonicida (strain LFI1238) (Vibrio salmonicida (strain LFI1238)).